The following is a 153-amino-acid chain: Protein Smg homolog (153 aa).

The protein belongs to the Smg family.

The protein is Protein Smg homolog of Neisseria gonorrhoeae (strain ATCC 700825 / FA 1090).